The sequence spans 972 residues: Serine/threonine-protein kinase ATG1 (972 aa).

Residues 18 to 319 (YVVEKEIGRG…FTEFFSNGLV (302 aa)) enclose the Protein kinase domain. Residues 24 to 32 (IGRGSFAVV) and lysine 48 each bind ATP. Aspartate 166 serves as the catalytic Proton acceptor. 5 disordered regions span residues 359 to 394 (KRAS…QSDQ), 424 to 444 (YNNQ…SNGR), 467 to 506 (ALQS…HRTT), 562 to 605 (ASQA…SRRP), and 743 to 764 (DDEE…NSSG). The span at 424 to 436 (YNNQEERSNEERQ) shows a compositional bias: basic and acidic residues. The segment covering 562-584 (ASQALQMARHSSTSVSAANTAKQ) has biased composition (polar residues). Over residues 585-605 (TLLRRNSRTLSSSGASTSRRP) the composition is skewed to low complexity. Basic and acidic residues predominate over residues 750 to 759 (EHSPGAETYR).

It belongs to the protein kinase superfamily. Ser/Thr protein kinase family. APG1/unc-51/ULK1 subfamily. As to quaternary structure, homodimer. Forms a ternary complex with ATG13 and ATG17.

Its subcellular location is the cytoplasm. It localises to the preautophagosomal structure membrane. The catalysed reaction is L-seryl-[protein] + ATP = O-phospho-L-seryl-[protein] + ADP + H(+). It carries out the reaction L-threonyl-[protein] + ATP = O-phospho-L-threonyl-[protein] + ADP + H(+). Its function is as follows. Serine/threonine protein kinase involved in the cytoplasm to vacuole transport (Cvt) and found to be essential in autophagy, where it is required for the formation of autophagosomes. Involved in the clearance of protein aggregates which cannot be efficiently cleared by the proteasome. Required for selective autophagic degradation of the nucleus (nucleophagy) as well as for mitophagy which contributes to regulate mitochondrial quantity and quality by eliminating the mitochondria to a basal level to fulfill cellular energy requirements and preventing excess ROS production. Also involved in endoplasmic reticulum-specific autophagic process, in selective removal of ER-associated degradation (ERAD) substrates. Plays a key role in ATG9 and ATG23 cycling through the pre-autophagosomal structure and is necessary to promote ATG18 binding to ATG9 through phosphorylation of ATG9. Catalyzes phosphorylation of ATG4, decreasing the interaction between ATG4 and ATG8 and impairing deconjugation of PE-conjugated forms of ATG8. The sequence is that of Serine/threonine-protein kinase ATG1 from Eremothecium gossypii (strain ATCC 10895 / CBS 109.51 / FGSC 9923 / NRRL Y-1056) (Yeast).